A 197-amino-acid polypeptide reads, in one-letter code: Imidazoleglycerol-phosphate dehydratase (197 aa).

It belongs to the imidazoleglycerol-phosphate dehydratase family.

It localises to the cytoplasm. The catalysed reaction is D-erythro-1-(imidazol-4-yl)glycerol 3-phosphate = 3-(imidazol-4-yl)-2-oxopropyl phosphate + H2O. Its pathway is amino-acid biosynthesis; L-histidine biosynthesis; L-histidine from 5-phospho-alpha-D-ribose 1-diphosphate: step 6/9. The protein is Imidazoleglycerol-phosphate dehydratase of Stutzerimonas stutzeri (strain A1501) (Pseudomonas stutzeri).